The primary structure comprises 1353 residues: Adenylate cyclase type 9 (1353 aa).

Disordered stretches follow at residues 1-27 (MASP…DSNS) and 49-71 (SISS…GGGG). Residues 1–117 (MASPPHQQLL…CFPQTQRRFR (117 aa)) are Cytoplasmic-facing. A compositionally biased stretch (polar residues) spans 16–27 (EVSCDSSGDSNS). Residues 49–66 (SISSSCSSSGDSGGVPRR) show a composition bias toward low complexity. The helical transmembrane segment at 118–138 (YALFYIGFACLLWSIYFAVHM) threads the bilayer. Over 139 to 141 (RSR) the chain is Extracellular. Residues 142-162 (LIVMVAPALCFLLVCVGFFLF) form a helical membrane-spanning segment. Residues 163–171 (TFTKLYARH) lie on the Cytoplasmic side of the membrane. The chain crosses the membrane as a helical span at residues 172-192 (YAWTSLALTLLVFALTLAAQF). At 193-215 (QVLTPVSGRGDSSNLTATARPTD) the chain is on the extracellular side. An N-linked (GlcNAc...) asparagine glycan is attached at N206. The helical transmembrane segment at 216-235 (TCLSQVGSFSMCIEVLFLLY) threads the bilayer. Over 236–241 (TVMHLP) the chain is Cytoplasmic. The chain crosses the membrane as a helical span at residues 242 to 259 (LYLSLCLGVAYSVLFETF). Residues 260-280 (GYHFRDEACFPSPGAGALHWE) are Extracellular-facing. Residues 281–301 (LLSRGLLHGCIHAIGVHLFVM) form a helical membrane-spanning segment. At 302-786 (SQVRSRSTFL…VKTFASPTFS (485 aa)) the chain is on the cytoplasmic side. The interval 349-375 (QGDEESENSVKRHATSSPKNRKKKSSI) is disordered. The segment covering 359–374 (KRHATSSPKNRKKKSS) has biased composition (basic residues). Positions 394 to 521 (SILFADIVGF…NDVNLANLME (128 aa)) constitute a Guanylate cyclase 1 domain. Residues D399, I400, and D443 each contribute to the Mg(2+) site. ATP-binding positions include 399-404 (DIVGFT), 441-443 (LGD), and R487. S610 carries the phosphoserine modification. The tract at residues 642-684 (EAGAEGGAPQNGCQDEHKNSTKASGGPNPKTQNGLLSPPQEEK) is disordered. S688, S691, and S706 each carry phosphoserine. The chain crosses the membrane as a helical span at residues 787 to 807 (SLLDVFLSTTVFLTLSTTCFL). The Extracellular segment spans residues 808–818 (KYEAATVPPPP). Residues 819 to 839 (AALAVFSAALLLEVLSLAVSI) form a helical membrane-spanning segment. At 840–867 (RMVFFLEDVMACTKRLLEWIAGWLPRHC) the chain is on the cytoplasmic side. A helical transmembrane segment spans residues 868 to 888 (IGAILVSLPALAVYSHVTSEY). Residues 889–891 (ETN) are Extracellular-facing. A helical membrane pass occupies residues 892–912 (IHFPVFTGSAALIAVVHYCNF). Topologically, residues 913 to 920 (CQLSSWMR) are cytoplasmic. The helical transmembrane segment at 921–941 (SSLATVVGAGPLLLLYVSLCP) threads the bilayer. Residues 942–975 (DSSVLTSPLDAVQNFSSERNPCNSSVPRDLRRPA) lie on the Extracellular side of the membrane. Residues N955 and N964 are each glycosylated (N-linked (GlcNAc...) asparagine). A helical transmembrane segment spans residues 976-996 (SLIGQEVVLVFFLLLLLVWFL). The Cytoplasmic portion of the chain corresponds to 997–1353 (NREFEVSYRL…LTKLNVSKSV (357 aa)). Residues 1058–1198 (GVIFASIVNF…DTVNIASRMD (141 aa)) enclose the Guanylate cyclase 2 domain. Residues K1108, 1185-1187 (DIW), 1192-1196 (NIASR), and K1232 each bind ATP. 4 positions are modified to phosphoserine: S1257, S1259, S1295, and S1307. Residues 1292 to 1301 (SLGSDSSTQA) are compositionally biased toward polar residues. Positions 1292 to 1326 (SLGSDSSTQAKDAHLSPKRPWKEPVKAEERGRFGK) are disordered. Positions 1302-1326 (KDAHLSPKRPWKEPVKAEERGRFGK) are enriched in basic and acidic residues.

This sequence belongs to the adenylyl cyclase class-4/guanylyl cyclase family. Mg(2+) is required as a cofactor. It depends on Mn(2+) as a cofactor. Detected in skeletal muscle, pancreas, lung, heart, kidney, liver, brain and placenta. Expressed in multiple cells of the lung, with expression highest in airway smooth muscle.

Its subcellular location is the cell membrane. The enzyme catalyses ATP = 3',5'-cyclic AMP + diphosphate. Insensitive to calcium/calmodulin, forskolin and somatostatin. Stimulated by beta-adrenergic receptor activation. Activity is down-regulated by calcium/calcineurin. Functionally, adenylyl cyclase that catalyzes the formation of the signaling molecule cAMP in response to activation of G protein-coupled receptors. Contributes to signaling cascades activated by CRH (corticotropin-releasing factor), corticosteroids and beta-adrenergic receptors. The protein is Adenylate cyclase type 9 (ADCY9) of Homo sapiens (Human).